Here is a 508-residue protein sequence, read N- to C-terminus: Bifunctional purine biosynthesis protein PurH (508 aa).

In terms of domain architecture, MGS-like spans 1 to 145 (MTKRALISVS…KNHQYVTVIV (145 aa)).

It belongs to the PurH family.

It carries out the reaction (6R)-10-formyltetrahydrofolate + 5-amino-1-(5-phospho-beta-D-ribosyl)imidazole-4-carboxamide = 5-formamido-1-(5-phospho-D-ribosyl)imidazole-4-carboxamide + (6S)-5,6,7,8-tetrahydrofolate. The enzyme catalyses IMP + H2O = 5-formamido-1-(5-phospho-D-ribosyl)imidazole-4-carboxamide. It functions in the pathway purine metabolism; IMP biosynthesis via de novo pathway; 5-formamido-1-(5-phospho-D-ribosyl)imidazole-4-carboxamide from 5-amino-1-(5-phospho-D-ribosyl)imidazole-4-carboxamide (10-formyl THF route): step 1/1. It participates in purine metabolism; IMP biosynthesis via de novo pathway; IMP from 5-formamido-1-(5-phospho-D-ribosyl)imidazole-4-carboxamide: step 1/1. The chain is Bifunctional purine biosynthesis protein PurH from Lysinibacillus sphaericus (strain C3-41).